The primary structure comprises 967 residues: Serine/threonine-protein kinase/endoribonuclease ire-1 (967 aa).

Residues 1–21 form the signal peptide; it reads MRATFHLFTFIFLLLFSSVIC. Topologically, residues 22-438 are lumenal; it reads ISTPGFRNDH…LLLLNNHPIP (417 aa). Asn100 and Asn188 each carry an N-linked (GlcNAc...) asparagine glycan. A helical transmembrane segment spans residues 439–455; the sequence is FYATLVTMFALLLTVIW. The Cytoplasmic portion of the chain corresponds to 456–967; that stretch reads QCGRQWDQQK…IKKKSNPNTD (512 aa). The tract at residues 474 to 494 is disordered; the sequence is EIVNNPGESRSAQTSKQSNRG. Over residues 479-494 the composition is skewed to polar residues; that stretch reads PGESRSAQTSKQSNRG. The 261-residue stretch at 518–778 folds into the Protein kinase domain; the sequence is YSPSDILGTG…ADAVLNHPFF (261 aa). Residues 524–532 and Lys546 each bind ATP; that span reads LGTGCEGTV. The active-site Proton acceptor is Asp636. Residue Ser672 is modified to Phosphoserine; by autocatalysis. One can recognise a KEN domain in the interval 781–909; that stretch reads SEKRLAYFSD…EAVFKRYYSD (129 aa). Residues 948–967 form a disordered region; sequence RTPLKLDKRNIKKKSNPNTD. The segment covering 957-967 has biased composition (basic residues); that stretch reads NIKKKSNPNTD.

The protein belongs to the protein kinase superfamily. Ser/Thr protein kinase family. Requires Mg(2+) as cofactor. Autophosphorylated mainly on serine residues.

The protein localises to the endoplasmic reticulum membrane. It carries out the reaction L-seryl-[protein] + ATP = O-phospho-L-seryl-[protein] + ADP + H(+). It catalyses the reaction L-threonyl-[protein] + ATP = O-phospho-L-threonyl-[protein] + ADP + H(+). With respect to regulation, the kinase domain is activated by trans-autophosphorylation. Kinase activity is required for activation of the endoribonuclease domain. Its function is as follows. Senses unfolded proteins in the lumen of the endoplasmic reticulum via its N-terminal domain which leads to enzyme auto-activation. The active endoribonuclease domain splices xbp-1 precursor mRNA to produce the mature form which then induces transcription of UPR target genes. Unfolded protein response (UPR) transcriptional activation by ire-1, as well as translational attenuation by pek-1 in a complementary pathway, maintains ER homeostasis. Regulates the transcriptional up-regulation of nucleoside-diphosphatase apy-1 and many other genes, upon ER stress. By activating the UPR pathway during non-lethal hypoxia pre-conditioning, confers adaptive protection to subsequent exposure to hypoxia. ire-1 and pek-1 are redundant genes that control a pathway essential for larval development and survival. Plays a role in the nuclear retention of unspliced mRNAs. The polypeptide is Serine/threonine-protein kinase/endoribonuclease ire-1 (Caenorhabditis elegans).